The sequence spans 123 residues: Fluoride-specific ion channel FluC (123 aa).

The next 4 helical transmembrane spans lie at 5 to 25, 29 to 49, 65 to 85, and 94 to 114; these read LIIG…SGII, FGIP…VGFV, LIIT…YETF, and IKFL…IYVG. Residues Gly72 and Thr75 each coordinate Na(+).

It belongs to the fluoride channel Fluc/FEX (TC 1.A.43) family.

Its subcellular location is the cell membrane. The catalysed reaction is fluoride(in) = fluoride(out). With respect to regulation, na(+) is not transported, but it plays an essential structural role and its presence is essential for fluoride channel function. Fluoride-specific ion channel. Important for reducing fluoride concentration in the cell, thus reducing its toxicity. This chain is Fluoride-specific ion channel FluC, found in Methanococcus aeolicus (strain ATCC BAA-1280 / DSM 17508 / OCM 812 / Nankai-3).